Consider the following 225-residue polypeptide: Uridylate kinase (225 aa).

9–10 serves as a coordination point for ATP; the sequence is GS. G44 lines the UMP pocket. Residues G45 and R49 each contribute to the ATP site. UMP contacts are provided by residues D66 and 114–120; that span reads THPGHTT. 4 residues coordinate ATP: T140, N141, Y146, and D149.

The protein belongs to the UMP kinase family. In terms of assembly, homohexamer.

The protein resides in the cytoplasm. It catalyses the reaction UMP + ATP = UDP + ADP. It functions in the pathway pyrimidine metabolism; CTP biosynthesis via de novo pathway; UDP from UMP (UMPK route): step 1/1. With respect to regulation, inhibited by UTP. In terms of biological role, catalyzes the reversible phosphorylation of UMP to UDP. This is Uridylate kinase from Thermococcus kodakarensis (strain ATCC BAA-918 / JCM 12380 / KOD1) (Pyrococcus kodakaraensis (strain KOD1)).